Consider the following 232-residue polypeptide: Large ribosomal subunit protein uL1 (232 aa).

This sequence belongs to the universal ribosomal protein uL1 family. Part of the 50S ribosomal subunit.

Functionally, binds directly to 23S rRNA. The L1 stalk is quite mobile in the ribosome, and is involved in E site tRNA release. Protein L1 is also a translational repressor protein, it controls the translation of the L11 operon by binding to its mRNA. In Mesorhizobium japonicum (strain LMG 29417 / CECT 9101 / MAFF 303099) (Mesorhizobium loti (strain MAFF 303099)), this protein is Large ribosomal subunit protein uL1.